Reading from the N-terminus, the 493-residue chain is Endolysin A (493 aa).

This sequence belongs to the L5likevirus endolysin A protein family.

Functionally, endolysin that degrades host peptidoglycans and participates with the holin protein in the sequential events which lead to the programmed host cell lysis releasing the mature viral particles. Once the holin has permeabilized the host cell membrane, the endolysin can reach the periplasm and break down the peptidoglycan layer. This chain is Endolysin A (10), found in Mycobacterium phage D29 (Mycobacteriophage D29).